The following is a 340-amino-acid chain: MALSLGLGLALSALVIGIRPQVVVPFGLSALGSALLGSLLIPGLRRWKAGQVIRQEGPQSHQKKAGTPTMGGISFLPVGLLVAGIWSGWDPHWLAVALLTLAYSFVGWLDDWLVIRQQSNKGLSPQHKLLLQVGVALGFCVYLAWQGIPTSLTLPGIGTLSLGWLFWPLALFVLVGTNNAVNLTDGMDGLAAGVVAILLIGLGLLHRDPELSVLAFTLSGACLGFLVHNHHRARLFMGDTGSLGLGGALAGLALLGDQLWALALMGGVLVAEALSVMLQVGYFQYTKRKTGTGQRLLRMSPLHHHLELGGWSEVQVVGSFYGVTALLVGLGWAWWHWTGM.

The next 9 membrane-spanning stretches (helical) occupy residues 22–42 (VVVP…LLIP), 69–89 (TMGG…WSGW), 95–115 (AVAL…WLVI), 129–149 (LLLQ…QGIP), 156–176 (GIGT…VLVG), 186–206 (GMDG…GLLH), 209–229 (PELS…LVHN), 235–257 (LFMG…LLGD), and 316–336 (VVGS…AWWH).

This sequence belongs to the glycosyltransferase 4 family. MraY subfamily. Mg(2+) serves as cofactor.

It is found in the cell inner membrane. The enzyme catalyses UDP-N-acetyl-alpha-D-muramoyl-L-alanyl-gamma-D-glutamyl-meso-2,6-diaminopimeloyl-D-alanyl-D-alanine + di-trans,octa-cis-undecaprenyl phosphate = di-trans,octa-cis-undecaprenyl diphospho-N-acetyl-alpha-D-muramoyl-L-alanyl-D-glutamyl-meso-2,6-diaminopimeloyl-D-alanyl-D-alanine + UMP. The protein operates within cell wall biogenesis; peptidoglycan biosynthesis. Catalyzes the initial step of the lipid cycle reactions in the biosynthesis of the cell wall peptidoglycan: transfers peptidoglycan precursor phospho-MurNAc-pentapeptide from UDP-MurNAc-pentapeptide onto the lipid carrier undecaprenyl phosphate, yielding undecaprenyl-pyrophosphoryl-MurNAc-pentapeptide, known as lipid I. In Synechococcus sp. (strain JA-2-3B'a(2-13)) (Cyanobacteria bacterium Yellowstone B-Prime), this protein is Phospho-N-acetylmuramoyl-pentapeptide-transferase.